Here is a 309-residue protein sequence, read N- to C-terminus: Probable copper-dependent oxygenase clz3 (309 aa).

2 N-linked (GlcNAc...) asparagine glycosylation sites follow: Asn-9 and Asn-249. Residues 257-277 form a helical membrane-spanning segment; that stretch reads FAVPLAAIAFIALIISGGYVI.

The protein belongs to the clz3 oxygenase family.

The protein resides in the membrane. Its pathway is secondary metabolite biosynthesis. Probable copper-dependent oxygenase; part of the gene cluster that mediates the biosynthesis of squalestatin S1 (SQS1, also known as zaragozic acid A), a heavily oxidized fungal polyketide that offers potent cholesterol lowering activity by targeting squalene synthase (SS). SQS1 is composed of a 2,8-dioxobicyclic[3.2.1]octane-3,4,5-tricarboxyclic acid core that is connected to two lipophilic polyketide arms. These initial steps feature the priming of an unusual benzoic acid starter unit onto the highly reducing polyketide synthase clz14, followed by oxaloacetate extension and product release to generate a tricarboxylic acid containing product. The phenylalanine ammonia lyase (PAL) clz10 and the acyl-CoA ligase clz12 are involved in transforming phenylalanine into benzoyl-CoA. The citrate synthase-like protein clz17 is involved in connecting the C-alpha-carbons of the hexaketide chain and oxaloacetate to afford the tricarboxylic acid unit. The potential hydrolytic enzymes, clz11 and clz13, are in close proximity to pks2 and may participate in product release. On the other side, the tetraketide arm is synthesized by a the squalestatin tetraketide synthase clz2 and enzymatically esterified to the core in the last biosynthetic step, by the acetyltransferase clz6. The biosynthesis of the tetraketide must involve 3 rounds of chain extension. After the first and second rounds methyl-transfer occurs, and in all rounds of extension the ketoreductase and dehydratase are active. The enoyl reductase and C-MeT of clz2 are not active in the final round of extension. The acetyltransferase clz6 appears to have a broad substrate selectivity for its acyl CoA substrate, allowing the in vitro synthesis of novel squalestatins. The biosynthesis of SQS1 requires several oxidative steps likely performed by oxidoreductases clz3, clz15 and clz16. Finally, in support of the identification of the cluster as being responsible for SQS1 production, the cluster contains a gene encoding a putative squalene synthase (SS) clz20, suggesting a likely mechanism for self-resistance. This Cochliobolus lunatus (Filamentous fungus) protein is Probable copper-dependent oxygenase clz3.